A 455-amino-acid polypeptide reads, in one-letter code: MWLELILASVLGFVIYWFVSRDKEETLPLEDGWWGPGSKPSAKEDESIRPFKVETSDEEIKDLHQRIDRFRASPPLEGSRFHYGFNSSYLKKVVSFWRNEFDWRKQVEILNQYPHFKTKIEGLDIHFIHVKPPQLPSGRTPKPLLMVHGWPGSFYEFYKIIPLLTDPKTHGLSDEHVFEVICPSIPGYGFSEASSKKGLNSVATARIFYKLMSRLGFQKFYIQGGDWGSLICTNIAQMVPNHVKGLHLNMSFISRNIYSLTPLLGQRFGRFLGYTEKDLELLYPFKEKVFYNIMRESGYLHIQATKPDTVGCALNDSPVGLAAYILEKFSTWTKSEYRELEDGGLERKFSLEDLLTNIMIYWTTGTIVSSQRFYKENLGQGVMVHRHEGMKVFVPTGYSAFPSEILHAPEKWVKVKYPKLISYSYMERGGHFAAFEEPKLLAQDIRKFVSLAELQ.

A helical; Signal-anchor for type III membrane protein membrane pass occupies residues 1-21; sequence MWLELILASVLGFVIYWFVSR. At 22–455 the chain is on the cytoplasmic side; it reads DKEETLPLED…RKFVSLAELQ (434 aa). D226 (nucleophile) is an active-site residue. The residue at position 295 (R295) is a Dimethylated arginine. Y374 acts as the Proton donor in catalysis. Residue H431 is the Proton acceptor of the active site. Position 439 is an N6-acetyllysine (K439).

The protein belongs to the peptidase S33 family.

The protein resides in the microsome membrane. It localises to the endoplasmic reticulum membrane. It catalyses the reaction cis-stilbene oxide + H2O = (1R,2R)-hydrobenzoin. It carries out the reaction 1-(4-methoxyphenyl)-N-methyl-N-[(3-methyloxetan-3-yl)methyl]methanamine + H2O = 2-{[(4-methoxybenzyl)(methyl)amino]methyl}-2-methylpropane-1,3-diol. The catalysed reaction is 8,9-epoxy-(5Z,11Z,14Z)-eicosatrienoate + H2O = 8,9-dihydroxy-(5Z,11Z,14Z)-eicosatrienoate. The enzyme catalyses 11,12-epoxy-(5Z,8Z,14Z)-eicosatrienoate + H2O = 11,12-dihydroxy-(5Z,8Z,14Z)-eicosatrienoate. It catalyses the reaction 2-(5Z,8Z,11Z,14Z-eicosatetraenoyl)-glycerol + H2O = glycerol + (5Z,8Z,11Z,14Z)-eicosatetraenoate + H(+). Its activity is regulated as follows. Inhibited by 10-hydroxystearamide and methoxy-arachidonyl fluorophosphate. Biotransformation enzyme that catalyzes the hydrolysis of arene and aliphatic epoxides to less reactive and more water soluble dihydrodiols by the trans addition of water. May play a role in the metabolism of endogenous lipids such as epoxide-containing fatty acids. Metabolizes the abundant endocannabinoid 2-arachidonoylglycerol (2-AG) to free arachidonic acid (AA) and glycerol. Binds 20(S)-hydroxycholesterol (20(S)-OHC). The sequence is that of Epoxide hydrolase 1 from Mus musculus (Mouse).